We begin with the raw amino-acid sequence, 89 residues long: Cell division protein ZapA (89 aa).

The protein belongs to the ZapA family. Type 2 subfamily. As to quaternary structure, homodimer. Interacts with FtsZ.

Its subcellular location is the cytoplasm. Its function is as follows. Activator of cell division through the inhibition of FtsZ GTPase activity, therefore promoting FtsZ assembly into bundles of protofilaments necessary for the formation of the division Z ring. It is recruited early at mid-cell but it is not essential for cell division. In Bacillus thuringiensis (strain Al Hakam), this protein is Cell division protein ZapA.